The following is a 204-amino-acid chain: Arginine exporter protein ArgO (204 aa).

6 consecutive transmembrane segments (helical) span residues 1–21, 37–57, 67–87, 111–131, 154–174, and 179–199; these read MWAV…PLGP, LMVA…GIFG, LLLG…GWGA, IIAT…DTFV, TASF…APWL, and VQRV…LQLA.

The protein belongs to the LysE/ArgO transporter (TC 2.A.75) family.

The protein resides in the cell inner membrane. The catalysed reaction is L-arginine(in) = L-arginine(out). Functionally, involved in the export of arginine. Important to control the intracellular level of arginine and the correct balance between arginine and lysine. The polypeptide is Arginine exporter protein ArgO (Pectobacterium atrosepticum (strain SCRI 1043 / ATCC BAA-672) (Erwinia carotovora subsp. atroseptica)).